The sequence spans 344 residues: Ras association domain-containing protein 1 (344 aa).

Ser2 is modified (N-acetylserine). Residue Ser2 is modified to Phosphoserine. Residues Ser2–Arg119 are mediates interaction with E4F1. Position 36 is an omega-N-methylarginine (Arg36). The Phorbol-ester/DAG-type zinc-finger motif lies at Gly51–Cys105. A compositionally biased stretch (low complexity) spans Ser179–Leu189. The interval Ser179 to Arg203 is disordered. The region spanning Arg198–Ser292 is the Ras-associating domain. The 48-residue stretch at Glu294 to Cys341 folds into the SARAH domain. The tract at residues Glu315 to Glu318 is MOAP1-binding.

In terms of assembly, interacts with MAP1S. Interacts with XPA. Binds to the N-terminal of CDC20 during prometaphase. Binds to STK3/MST2 and STK4/MST1. Recruited to the TNFRSF1A and TNFRSF10A complexes in response to their respective cognate ligand, after internalization. Can self-associate. Part of a complex with MDM2, DAXX, RASSF1 and USP7. Interacts with ECM2. Interacts with MOAP1. Interacts with E4F1. Interacts with RSSF5 and probably associates with HRAS via a RSSF1 isoform A-RSSF5 heterodimer. Interacts (via C-terminus) with DAXX (via N-terminus); the interaction is independent of MDM2 and TP53. Interacts (via N-terminus) with MDM2 (via C-terminus); the interaction is independent of TP53. Interacts with RAB39A. Interacts with RAB39B; the interaction is weak. As to quaternary structure, interacts (via N-terminus) with DAXX. Interacts with RAB39B; the interaction is strong. Does not interact with RAB39A. In terms of assembly, interacts (via N-terminus) with DAXX. As to expression, isoform A and isoform C are ubiquitously expressed in all tissues tested, however isoform A is absent in many corresponding cancer cell lines. Isoform B is mainly expressed in hematopoietic cells.

Its subcellular location is the cytoplasm. The protein resides in the cytoskeleton. It is found in the microtubule organizing center. It localises to the centrosome. The protein localises to the spindle. Its subcellular location is the spindle pole. The protein resides in the nucleus. Functionally, potential tumor suppressor. Required for death receptor-dependent apoptosis. Mediates activation of STK3/MST2 and STK4/MST1 during Fas-induced apoptosis by preventing their dephosphorylation. When associated with MOAP1, promotes BAX conformational change and translocation to mitochondrial membranes in response to TNF and TNFSF10 stimulation. Isoform A interacts with CDC20, an activator of the anaphase-promoting complex, APC, resulting in the inhibition of APC activity and mitotic progression. Inhibits proliferation by negatively regulating cell cycle progression at the level of G1/S-phase transition by regulating accumulation of cyclin D1 protein. Isoform C has been shown not to perform these roles, no function has been identified for this isoform. Isoform A disrupts interactions among MDM2, DAXX and USP7, thus contributing to the efficient activation of TP53 by promoting MDM2 self-ubiquitination in cell-cycle checkpoint control in response to DNA damage. This Homo sapiens (Human) protein is Ras association domain-containing protein 1.